We begin with the raw amino-acid sequence, 915 residues long: Scaffold attachment factor B1 (915 aa).

Positions 1-24 are enriched in low complexity; it reads MAETLSGLGDSGAAGAAALSSASS. A disordered region spans residues 1–33; the sequence is MAETLSGLGDSGAAGAAALSSASSETGTRRLSD. An N-acetylalanine modification is found at Ala2. Phosphoserine is present on residues Ser24 and Ser55. In terms of domain architecture, SAP spans 31–65; sequence LSDLRVIDLRAELRKRNVDSSGNKSVLMERLKKAI. The interval 64 to 118 is disordered; the sequence is AIEDEGGNPDEIEITSEGNKKTSKRSSKGRKPEEEGVEDNGLEENSGDGQEDVET. A compositionally biased stretch (acidic residues) spans 67–77; sequence DEGGNPDEIEI. The residue at position 79 (Ser79) is a Phosphoserine. The span at 98 to 118 shows a compositional bias: acidic residues; the sequence is EGVEDNGLEENSGDGQEDVET. Residues Lys172 and Lys186 each participate in a glycyl lysine isopeptide (Lys-Gly) (interchain with G-Cter in SUMO2) cross-link. Thr188 is subject to Phosphothreonine. 3 positions are modified to phosphoserine: Ser195, Ser197, and Ser209. The segment at 221–407 is disordered; the sequence is LGETCKSEPV…EKGRSSCGRN (187 aa). Positions 225–234 are enriched in basic and acidic residues; that stretch reads CKSEPVKEES. Residue Lys231 forms a Glycyl lysine isopeptide (Lys-Gly) (interchain with G-Cter in SUMO) linkage. Polar residues predominate over residues 275–286; sequence SESTAHAQSSKA. Over residues 293–309 the composition is skewed to basic and acidic residues; it reads VKREPAEQPGDGERTDC. A Glycyl lysine isopeptide (Lys-Gly) (interchain with G-Cter in SUMO) cross-link involves residue Lys294. The span at 319–330 shows a compositional bias: low complexity; it reads EQSSAASELAEA. The segment covering 346 to 359 has biased composition (basic and acidic residues); the sequence is EARDSKEDGRKFDF. Positions 371-383 are enriched in polar residues; it reads ESSTSEGADQKMS. A Glycyl lysine isopeptide (Lys-Gly) (interchain with G-Cter in SUMO2) cross-link involves residue Lys381. 2 positions are modified to phosphoserine: Ser383 and Ser384. The span at 390 to 401 shows a compositional bias: basic and acidic residues; that stretch reads DTKRLSKEEKGR. Residue Lys392 forms a Glycyl lysine isopeptide (Lys-Gly) (interchain with G-Cter in SUMO2) linkage. The 79-residue stretch at 406–484 folds into the RRM domain; that stretch reads RNFWVSGLSS…KMISVEKAKN (79 aa). Residue Ser415 is modified to Phosphoserine. Basic and acidic residues-rich tracts occupy residues 477–551 and 559–570; these read ISVE…ERSR and GTERTVVMDKSK. 3 disordered regions span residues 477-641, 671-708, and 749-915; these read ISVE…EREE, RERM…ERRP, and FDHR…TRRY. Residues Lys483, Lys514, Lys543, and Lys570 each participate in a glycyl lysine isopeptide (Lys-Gly) (interchain with G-Cter in SUMO2) cross-link. An interaction with POLR2A. Interaction with SFRS1; SFRS9 and SFRS10 region spans residues 528-792; that stretch reads GDDGSGEKSK…RHGGPERHGR (265 aa). Residue Lys578 forms a Glycyl lysine isopeptide (Lys-Gly) (interchain with G-Cter in SUMO1); alternate linkage. Lys578 is covalently cross-linked (Glycyl lysine isopeptide (Lys-Gly) (interchain with G-Cter in SUMO2); alternate). 4 positions are modified to phosphoserine: Ser580, Ser582, Ser601, and Ser604. The span at 581-641 shows a compositional bias: basic and acidic residues; that stretch reads GSKERASKSQ…RMQAQWEREE (61 aa). The short motif at 599–616 is the Nuclear localization signal element; it reads KRSVVSFDKVKEPRKSRD. The interval 599 to 915 is interaction with SAFB2; sequence KRSVVSFDKV…PSDARFTRRY (317 aa). Lys607 is modified (N6-acetyllysine). Residues 749-796 show a composition bias toward basic and acidic residues; the sequence is FDHRDRGRYPDHSVDRREGSRSMMGEREGQHYPERHGGPERHGRDSRD. An Omega-N-methylarginine modification is found at Arg811. Basic and acidic residues-rich tracts occupy residues 817–832 and 841–851; these read PRRD…DDRS and MMDRDHKRWQG. Lys847 participates in a covalent cross-link: Glycyl lysine isopeptide (Lys-Gly) (interchain with G-Cter in SUMO2). Asymmetric dimethylarginine is present on residues Arg868, Arg874, and Arg884. Positions 892-901 are enriched in gly residues; sequence GMQGGFGGQS. A compositionally biased stretch (basic and acidic residues) spans 905–915; that stretch reads RPSDARFTRRY.

In terms of assembly, monomer and homodimer. Forms heterodimers with SAFB2. Interacts with KHDRBS3. Interacts with CLK2. Interacts with POLR2A, SRSF1/ASF, SRSF9/SRp30c and SFSF10/TRA2B. Interacts with isoform 1 and isoform 2 of SRPK1 and inhibits its activity. Interacts with RBMX. Interacts with FUS. Interacts with ZBED4. Post-translationally, sumoylated by PIAS1 with SUMO1 and SUMO2/3, desumoylated by SENP1. Sumoylation is required for transcriptional repressor activity. As to expression, ubiquitous. Expressed at high levels in the CNS and at low levels in the liver. Expressed in a wide number of breast cancer cell lines.

The protein localises to the nucleus. Functionally, binds to scaffold/matrix attachment region (S/MAR) DNA and forms a molecular assembly point to allow the formation of a 'transcriptosomal' complex (consisting of SR proteins and RNA polymerase II) coupling transcription and RNA processing. Functions as an estrogen receptor corepressor and can also bind to the HSP27 promoter and decrease its transcription. Thereby acts as a negative regulator of cell proliferation. When associated with RBMX, binds to and stimulates transcription from the SREBF1 promoter. The sequence is that of Scaffold attachment factor B1 (SAFB) from Homo sapiens (Human).